The primary structure comprises 595 residues: Pectinesterase 5 (595 aa).

The first 24 residues, 1–24 (MIGKVVVSVASILLIVGVAIGVVA), serve as a signal peptide directing secretion. N-linked (GlcNAc...) asparagine glycans are attached at residues N86 and N206. The interval 215-239 (SDKGAAPVNKGTPPVADDSPVADPD) is disordered. A compositionally biased stretch (low complexity) spans 227–239 (PPVADDSPVADPD). Residues 243 to 246 (RRLL) carry the RRLL cleavage motif motif. Residues 263–266 (RKLM) carry the RKLM cleavage motif motif. N349 is a glycosylation site (N-linked (GlcNAc...) asparagine). The substrate site is built by T360 and Q390. D413 acts as the Proton donor in catalysis. The active-site Nucleophile is D434. Positions 503 and 505 each coordinate substrate.

In the N-terminal section; belongs to the PMEI family. It in the C-terminal section; belongs to the pectinesterase family. In terms of assembly, interacts with SBT6.1. As to expression, expressed in pollen grains and pollen tubes.

The protein resides in the cell membrane. The protein localises to the secreted. It localises to the cell wall. Its subcellular location is the golgi apparatus membrane. The catalysed reaction is [(1-&gt;4)-alpha-D-galacturonosyl methyl ester](n) + n H2O = [(1-&gt;4)-alpha-D-galacturonosyl](n) + n methanol + n H(+). Its pathway is glycan metabolism; pectin degradation; 2-dehydro-3-deoxy-D-gluconate from pectin: step 1/5. Functionally, acts in the modification of cell walls via demethylesterification of cell wall pectin. Plays an important role in growth of pollen tubes in female floral tissues, possibly via enhancing the interaction between the pollen tube and female floral tissues by modification of the cell walls. May be regulated by MYB80 during anther development and play a role in tapetum and pollen development. This chain is Pectinesterase 5 (PME5), found in Arabidopsis thaliana (Mouse-ear cress).